A 163-amino-acid polypeptide reads, in one-letter code: MQHYVTPDLCDAYPDLVQVLEPMFSNFGGRDSFGGQIVTIKCFEDNSLVKEQVELDGKGKVLVVDGGGSLRRALLGDMLAEKAAKNGWEGLVIYGCVRDVDVLIQTDVGVQALASHPMKTDKRGIGDLNVVVTFAGVTFRPGEYVYADNNGVLVSPKPLKMPE.

Residues 76-79 and Arg98 each bind substrate; that span reads GDML. Asp99 provides a ligand contact to a divalent metal cation.

The protein belongs to the class II aldolase/RraA-like family. In terms of assembly, homotrimer. Requires a divalent metal cation as cofactor.

The catalysed reaction is 4-hydroxy-4-methyl-2-oxoglutarate = 2 pyruvate. It carries out the reaction oxaloacetate + H(+) = pyruvate + CO2. In terms of biological role, catalyzes the aldol cleavage of 4-hydroxy-4-methyl-2-oxoglutarate (HMG) into 2 molecules of pyruvate. Also contains a secondary oxaloacetate (OAA) decarboxylase activity due to the common pyruvate enolate transition state formed following C-C bond cleavage in the retro-aldol and decarboxylation reactions. The sequence is that of Putative 4-hydroxy-4-methyl-2-oxoglutarate aldolase from Pseudomonas putida (strain ATCC 47054 / DSM 6125 / CFBP 8728 / NCIMB 11950 / KT2440).